Here is a 567-residue protein sequence, read N- to C-terminus: Arginine--tRNA ligase (567 aa).

The 'HIGH' region motif lies at 121–131 (ANPNGPLHVGH).

This sequence belongs to the class-I aminoacyl-tRNA synthetase family.

It localises to the cytoplasm. It catalyses the reaction tRNA(Arg) + L-arginine + ATP = L-arginyl-tRNA(Arg) + AMP + diphosphate. This Methanococcoides burtonii (strain DSM 6242 / NBRC 107633 / OCM 468 / ACE-M) protein is Arginine--tRNA ligase.